The following is a 321-amino-acid chain: Citrate synthase (321 aa).

Catalysis depends on residues H248 and D306.

It belongs to the citrate synthase family.

It carries out the reaction oxaloacetate + acetyl-CoA + H2O = citrate + CoA + H(+). It functions in the pathway carbohydrate metabolism; tricarboxylic acid cycle; isocitrate from oxaloacetate: step 1/2. In Bartonella bacilliformis, this protein is Citrate synthase (gltA).